The sequence spans 180 residues: MKTVYIVAGLFVMLVQGSWQHAPQDTEENARSFPASQTEPLEDPDQINEDKRHSQGTFTSDYSKYLDSRRAQDFVQWLMNTKRNRNNIAKRHDEFERHAEGTFTSDVSSYLEGQAAKEFIAWLVKGRGRRDFPEEVAIAEELGRRHADGSFSDEMNTILDNLATRDFINWLIQTKITDKK.

Residues 1-20 (MKTVYIVAGLFVMLVQGSWQ) form the signal peptide. The segment at 23–59 (PQDTEENARSFPASQTEPLEDPDQINEDKRHSQGTFT) is disordered. The residue at position 54 (serine 54) is a Phosphoserine. Residues 84–89 (NRNNIA) constitute a propeptide that is removed on maturation. Phosphoserine occurs at positions 105 and 108. Arginine 127 is modified (arginine amide). Residues 131–145 (DFPEEVAIAEELGRR) constitute a propeptide that is removed on maturation. Phosphoserine occurs at positions 150 and 152.

It belongs to the glucagon family. Proglucagon is post-translationally processed in a tissue-specific manner in pancreatic A cells and intestinal L cells. In pancreatic A cells, the major bioactive hormone is glucagon cleaved by PCSK2/PC2. In the intestinal L cells PCSK1/PC1 liberates GLP-1, GLP-2, glicentin and oxyntomodulin. GLP-1 is further N-terminally truncated by post-translational processing in the intestinal L cells resulting in GLP-1(7-37) GLP-1-(7-36)amide. The C-terminal amidation is neither important for the metabolism of GLP-1 nor for its effects on the endocrine pancreas. Glucagon is secreted in the A cells of the islets of Langerhans. GLP-1, GLP-2, oxyntomodulin and glicentin are secreted from enteroendocrine cells throughout the gastrointestinal tract.

It is found in the secreted. Plays a key role in glucose metabolism and homeostasis. Regulates blood glucose by increasing gluconeogenesis and decreasing glycolysis. A counterregulatory hormone of insulin, raises plasma glucose levels in response to insulin-induced hypoglycemia. Plays an important role in initiating and maintaining hyperglycemic conditions in diabetes. Its function is as follows. Potent stimulator of glucose-dependent insulin release. Also stimulates insulin release in response to IL6. Plays important roles on gastric motility and the suppression of plasma glucagon levels. May be involved in the suppression of satiety and stimulation of glucose disposal in peripheral tissues, independent of the actions of insulin. Has growth-promoting activities on intestinal epithelium. May also regulate the hypothalamic pituitary axis (HPA) via effects on LH, TSH, CRH, oxytocin, and vasopressin secretion. Increases islet mass through stimulation of islet neogenesis and pancreatic beta cell proliferation. Inhibits beta cell apoptosis. Functionally, stimulates intestinal growth and up-regulates villus height in the small intestine, concomitant with increased crypt cell proliferation and decreased enterocyte apoptosis. The gastrointestinal tract, from the stomach to the colon is the principal target for GLP-2 action. Plays a key role in nutrient homeostasis, enhancing nutrient assimilation through enhanced gastrointestinal function, as well as increasing nutrient disposal. Stimulates intestinal glucose transport and decreases mucosal permeability. In terms of biological role, may modulate gastric acid secretion and the gastro-pyloro-duodenal activity. May play an important role in intestinal mucosal growth in the early period of life. Oxyntomodulin significantly reduces food intake. The polypeptide is Pro-glucagon (Gcg) (Rattus norvegicus (Rat)).